The sequence spans 1132 residues: APC membrane recruitment protein 1 (1132 aa).

Methionine 1 is subject to N-acetylmethionine. The span at 1-21 shows a compositional bias: polar residues; it reads MESQQDEAVQTKGASTSSDAQ. Disordered regions lie at residues 1–256, 268–301, 338–423, 469–505, 674–699, 736–770, 924–949, and 1038–1132; these read MESQ…ACKN, FMQP…NPPN, SMTD…GEEN, GLGE…DSGE, TSGG…EPDW, MQEA…GNAT, ELQA…DSPL, and SQAS…NLAK. The span at 24–35 shows a compositional bias: basic and acidic residues; sequence GAEKGAKNKTTE. The segment covering 121 to 133 has biased composition (low complexity); that stretch reads SKSSAQFPSSQSA. Basic and acidic residues-rich tracts occupy residues 195–208, 218–229, and 281–290; these read KELE…HEHV, EIFRDTRKENAK, and EEPHTSETEG. A compositionally biased stretch (acidic residues) spans 372–423; that stretch reads ALPDDDDNDDEEEEEEEEEEEEEEEEEEEEEEEEEEEELLEDEEEVKDGEEN. Composition is skewed to polar residues over residues 475–486 and 677–696; these read TPQSDQQESAPN and GSQT…SSSE. Composition is skewed to acidic residues over residues 756 to 765 and 931 to 941; these read EEPEEEEEEK and DSDEEGEEEEG. Polar residues-rich tracts occupy residues 1059 to 1072 and 1115 to 1132; these read SCSS…QSQA and ASLS…NLAK.

This sequence belongs to the Amer family. Interacts with CTNNB1, AXIN1, LRP6, KEAP1, APC and BTRC. Interacts with SCF (SKP1-CUL1-F-box protein) E3 ubiquitin-protein ligase complexes containing BTRC and/or FBXW11. Identified in the beta-catenin destruction complex containing CTNNB1, APC, AXIN1 and AXIN2. Interacts with WT1. In terms of tissue distribution, expressed in kidney.

The protein localises to the cytoplasm. The protein resides in the cell membrane. It localises to the nucleus. Functionally, regulator of the canonical Wnt signaling pathway. Acts by specifically binding phosphatidylinositol 4,5-bisphosphate (PtdIns(4,5)P2), translocating to the cell membrane and interacting with key regulators of the canonical Wnt signaling pathway, such as components of the beta-catenin destruction complex. Acts both as a positive and negative regulator of the Wnt signaling pathway, depending on the context: acts as a positive regulator by promoting LRP6 phosphorylation. Also acts as a negative regulator by acting as a scaffold protein for the beta-catenin destruction complex and promoting stabilization of Axin at the cell membrane. Promotes CTNNB1 ubiquitination and degradation. Involved in kidney development. The polypeptide is APC membrane recruitment protein 1 (Amer1) (Mus musculus (Mouse)).